A 431-amino-acid polypeptide reads, in one-letter code: Enolase (431 aa).

Gln166 contacts (2R)-2-phosphoglycerate. Glu208 acts as the Proton donor in catalysis. Positions 245, 288, and 315 each coordinate Mg(2+). (2R)-2-phosphoglycerate contacts are provided by Lys340, Arg369, Ser370, and Lys391. Lys340 (proton acceptor) is an active-site residue.

This sequence belongs to the enolase family. The cofactor is Mg(2+).

It is found in the cytoplasm. It localises to the secreted. The protein resides in the cell surface. The catalysed reaction is (2R)-2-phosphoglycerate = phosphoenolpyruvate + H2O. Its pathway is carbohydrate degradation; glycolysis; pyruvate from D-glyceraldehyde 3-phosphate: step 4/5. Catalyzes the reversible conversion of 2-phosphoglycerate (2-PG) into phosphoenolpyruvate (PEP). It is essential for the degradation of carbohydrates via glycolysis. The chain is Enolase from Clostridium botulinum (strain ATCC 19397 / Type A).